Reading from the N-terminus, the 349-residue chain is Protein RAE1 (349 aa).

The segment at 1–21 (MATFGAPATANSNPNKSYEVT) is disordered. An N-acetylalanine modification is found at Ala2. Over residues 9 to 21 (TANSNPNKSYEVT) the composition is skewed to polar residues. WD repeat units lie at residues 23-62 (SPAD…ASLA), 70-109 (SHDQ…QPVT), 112-151 (MHEG…PVHT), 153-190 (QLPD…TEFK), and 244-283 (NDIY…RLKA). The DWD box signature appears at 128–144 (LLATGSWDKTLKYWDTR).

It belongs to the WD repeat rae1 family. As to quaternary structure, part of the nuclear pore complex (NPC). The NPC has an eight-fold symmetrical structure comprising a central transport channel and two rings, the cytoplasmic and nuclear rings, to which eight filaments are attached. The cytoplasmic filaments have loose ends, while the nuclear filaments are joined in a distal ring, forming a nuclear basket. NPCs are highly dynamic in configuration and composition, and can be devided in 3 subcomplexes, the NUP62 subcomplex, the NUP107-160 subcomplex and the NUP93 subcomplex, containing approximately 30 different nucleoporin proteins. Interacts with DDB1A.

Its subcellular location is the nucleus envelope. It localises to the nucleus. The protein localises to the nuclear pore complex. This is Protein RAE1 from Arabidopsis thaliana (Mouse-ear cress).